Reading from the N-terminus, the 308-residue chain is GTP cyclohydrolase MptA (308 aa).

The segment at 282 to 308 is disordered; it reads NDESIHQHNAHAEREVTLGQLRDELDA.

Belongs to the GTP cyclohydrolase IV family. As to quaternary structure, homodimer. Fe(2+) is required as a cofactor.

It catalyses the reaction GTP + H2O = 7,8-dihydroneopterin 2',3'-cyclic phosphate + formate + diphosphate + H(+). It functions in the pathway cofactor biosynthesis; 5,6,7,8-tetrahydromethanopterin biosynthesis. Its function is as follows. Converts GTP to 7,8-dihydro-D-neopterin 2',3'-cyclic phosphate, the first intermediate in the biosynthesis of coenzyme methanopterin. Involved in archaeosine (G(+)) and folate biosynthesis. This is GTP cyclohydrolase MptA from Haloferax volcanii (strain ATCC 29605 / DSM 3757 / JCM 8879 / NBRC 14742 / NCIMB 2012 / VKM B-1768 / DS2) (Halobacterium volcanii).